Here is a 995-residue protein sequence, read N- to C-terminus: Beta-agarase A (995 aa).

A signal peptide spans 1–20 (MKIKFLSAAIAASLALPLSA). Positions 936–972 (GTNIGVSHSGPEAPDPGEPVDPPIDPPTPPTGGVTGG) are disordered. The segment covering 948-965 (APDPGEPVDPPIDPPTPP) has biased composition (pro residues).

It belongs to the glycosyl hydrolase 50 family.

It carries out the reaction Hydrolysis of (1-&gt;4)-beta-D-galactosidic linkages in agarose, giving the tetramer as the predominant product.. Its function is as follows. Hydrolyzes agarose and also neoagarotetraose to yield neoagarobiose. The polypeptide is Beta-agarase A (agaA) (Vibrio sp. (strain JT0107)).